Here is a 591-residue protein sequence, read N- to C-terminus: Aspartate--tRNA(Asp/Asn) ligase (591 aa).

L-aspartate is bound at residue E170. Residues 194-197 (QLFK) are aspartate. Residue R216 participates in L-aspartate binding. Residues 216-218 (RDE) and Q225 contribute to the ATP site. Position 448 (H448) interacts with L-aspartate. Residue E482 participates in ATP binding. R489 provides a ligand contact to L-aspartate. 534–537 (GWDR) contributes to the ATP binding site. The interval 559–591 (GGVDPLTDAPAPITEQQRKESGIDVKPEPSKPH) is disordered. Over residues 574–591 (QQRKESGIDVKPEPSKPH) the composition is skewed to basic and acidic residues.

The protein belongs to the class-II aminoacyl-tRNA synthetase family. Type 1 subfamily. As to quaternary structure, homodimer.

Its subcellular location is the cytoplasm. The catalysed reaction is tRNA(Asx) + L-aspartate + ATP = L-aspartyl-tRNA(Asx) + AMP + diphosphate. Aspartyl-tRNA synthetase with relaxed tRNA specificity since it is able to aspartylate not only its cognate tRNA(Asp) but also tRNA(Asn). Reaction proceeds in two steps: L-aspartate is first activated by ATP to form Asp-AMP and then transferred to the acceptor end of tRNA(Asp/Asn). The polypeptide is Aspartate--tRNA(Asp/Asn) ligase (Mycobacterium avium (strain 104)).